Reading from the N-terminus, the 180-residue chain is Pro-glucagon (180 aa).

The first 20 residues, 1–20 (MKSIYFVAGLFVMLVQGSWQ), serve as a signal peptide directing secretion. Positions 23–56 (LQDTEEKPRSFSTSQTDLLDDPDQMNEDKRHSQG) are disordered. Phosphoserine is present on S54. The propeptide occupies 84 to 89 (NRNEIA). A phosphoserine mark is found at S105 and S108. Arginine amide is present on R127. Positions 131–145 (DFPEEVTIVEELRRR) are excised as a propeptide. Phosphoserine is present on residues S150 and S152.

It belongs to the glucagon family. Post-translationally, proglucagon is post-translationally processed in a tissue-specific manner in pancreatic A cells and intestinal L cells. In pancreatic A cells, the major bioactive hormone is glucagon cleaved by PCSK2/PC2. In the intestinal L cells PCSK1/PC1 liberates GLP-1, GLP-2, glicentin and oxyntomodulin. GLP-1 is further N-terminally truncated by post-translational processing in the intestinal L cells resulting in GLP-1(7-37) GLP-1-(7-36)amide. The C-terminal amidation is neither important for the metabolism of GLP-1 nor for its effects on the endocrine pancreas. In terms of tissue distribution, glucagon is secreted in the A cells of the islets of Langerhans. GLP-1, GLP-2, oxyntomodulin and glicentin are secreted from enteroendocrine cells throughout the gastrointestinal tract. GLP-1 and GLP-2 are also secreted in selected neurons in the brain.

It is found in the secreted. Plays a key role in glucose metabolism and homeostasis. Regulates blood glucose by increasing gluconeogenesis and decreasing glycolysis. A counterregulatory hormone of insulin, raises plasma glucose levels in response to insulin-induced hypoglycemia. Plays an important role in initiating and maintaining hyperglycemic conditions in diabetes. Its function is as follows. Potent stimulator of glucose-dependent insulin release. Also stimulates insulin release in response to IL6. Plays important roles on gastric motility and the suppression of plasma glucagon levels. May be involved in the suppression of satiety and stimulation of glucose disposal in peripheral tissues, independent of the actions of insulin. Has growth-promoting activities on intestinal epithelium. May also regulate the hypothalamic pituitary axis (HPA) via effects on LH, TSH, CRH, oxytocin, and vasopressin secretion. Increases islet mass through stimulation of islet neogenesis and pancreatic beta cell proliferation. Inhibits beta cell apoptosis. Functionally, stimulates intestinal growth and up-regulates villus height in the small intestine, concomitant with increased crypt cell proliferation and decreased enterocyte apoptosis. The gastrointestinal tract, from the stomach to the colon is the principal target for GLP-2 action. Plays a key role in nutrient homeostasis, enhancing nutrient assimilation through enhanced gastrointestinal function, as well as increasing nutrient disposal. Stimulates intestinal glucose transport and decreases mucosal permeability. In terms of biological role, significantly reduces food intake. Inhibits gastric emptying in humans. Suppression of gastric emptying may lead to increased gastric distension, which may contribute to satiety by causing a sensation of fullness. May modulate gastric acid secretion and the gastro-pyloro-duodenal activity. May play an important role in intestinal mucosal growth in the early period of life. The polypeptide is Pro-glucagon (GCG) (Octodon degus (Degu)).